The chain runs to 91 residues: Small ribosomal subunit protein bS20 (91 aa).

It belongs to the bacterial ribosomal protein bS20 family.

Binds directly to 16S ribosomal RNA. The chain is Small ribosomal subunit protein bS20 from Caulobacter vibrioides (strain ATCC 19089 / CIP 103742 / CB 15) (Caulobacter crescentus).